The sequence spans 601 residues: Glutathione-regulated potassium-efflux system protein KefB (601 aa).

A run of 13 helical transmembrane segments spans residues 4–24 (ADLL…VPLA), 29–49 (IGAV…GLGF), 55–75 (EILH…GLEL), 87–107 (IFGV…GLLM), 111–131 (FLWQ…TAMA), 152–172 (VLLF…LLAG), 177–197 (HFDW…LIGG), 207–227 (FIAA…LVLS), 230–250 (LFMD…GVLL), 262–282 (AIDP…GMSL), 284–304 (LGVL…LVVI), 324–344 (MQFA…FSTA), and 356–376 (ALLL…MKGI). Residues 400 to 519 (KPQVIVVGFG…AGVTQFSRET (120 aa)) enclose the RCK N-terminal domain.

It belongs to the monovalent cation:proton antiporter 2 (CPA2) transporter (TC 2.A.37) family. KefB subfamily. Interacts with the regulatory subunit KefG.

The protein localises to the cell inner membrane. Pore-forming subunit of a potassium efflux system that confers protection against electrophiles. Catalyzes K(+)/H(+) antiport. The sequence is that of Glutathione-regulated potassium-efflux system protein KefB from Salmonella enteritidis PT4 (strain P125109).